The sequence spans 388 residues: GTPase Obg (388 aa).

The 159-residue stretch at 1 to 159 folds into the Obg domain; sequence MKFVDEAVIK…RELRLELLLL (159 aa). The OBG-type G domain maps to 160 to 333; sequence ADVGMLGLPN…LCYKLADFME (174 aa). Residues 166–173, 191–195, 213–216, 283–286, and 314–316 contribute to the GTP site; these read GLPNAGKS, FTTLI, DIPG, NKVD, and SAV. Residues Ser173 and Thr193 each contribute to the Mg(2+) site. The interval 359–380 is disordered; sequence NQGEVITEDDDDWDDWDDEEDD. The span at 364–380 shows a compositional bias: acidic residues; it reads ITEDDDDWDDWDDEEDD.

This sequence belongs to the TRAFAC class OBG-HflX-like GTPase superfamily. OBG GTPase family. Monomer. The cofactor is Mg(2+).

The protein resides in the cytoplasm. An essential GTPase which binds GTP, GDP and possibly (p)ppGpp with moderate affinity, with high nucleotide exchange rates and a fairly low GTP hydrolysis rate. Plays a role in control of the cell cycle, stress response, ribosome biogenesis and in those bacteria that undergo differentiation, in morphogenesis control. The polypeptide is GTPase Obg (Vibrio vulnificus (strain YJ016)).